The following is a 366-amino-acid chain: Small ribosomal subunit biogenesis GTPase RsgA (366 aa).

Residues 107–266 (RSEGQILAAN…LIDTPGLRGV (160 aa)) form the CP-type G domain. GTP-binding positions include 154 to 157 (TKAD) and 208 to 216 (GQSGAGKST). 4 residues coordinate Zn(2+): Cys-289, Cys-294, His-296, and Cys-302.

Belongs to the TRAFAC class YlqF/YawG GTPase family. RsgA subfamily. Monomer. Associates with 30S ribosomal subunit, binds 16S rRNA. It depends on Zn(2+) as a cofactor.

Its subcellular location is the cytoplasm. Functionally, one of several proteins that assist in the late maturation steps of the functional core of the 30S ribosomal subunit. Helps release RbfA from mature subunits. May play a role in the assembly of ribosomal proteins into the subunit. Circularly permuted GTPase that catalyzes slow GTP hydrolysis, GTPase activity is stimulated by the 30S ribosomal subunit. This Streptomyces coelicolor (strain ATCC BAA-471 / A3(2) / M145) protein is Small ribosomal subunit biogenesis GTPase RsgA.